A 208-amino-acid polypeptide reads, in one-letter code: Large ribosomal subunit protein uL4 (208 aa).

Belongs to the universal ribosomal protein uL4 family. As to quaternary structure, part of the 50S ribosomal subunit.

Its function is as follows. One of the primary rRNA binding proteins, this protein initially binds near the 5'-end of the 23S rRNA. It is important during the early stages of 50S assembly. It makes multiple contacts with different domains of the 23S rRNA in the assembled 50S subunit and ribosome. Forms part of the polypeptide exit tunnel. The protein is Large ribosomal subunit protein uL4 of Solibacter usitatus (strain Ellin6076).